The sequence spans 341 residues: 4-hydroxy-2-oxovalerate aldolase 3 (341 aa).

The Pyruvate carboxyltransferase domain maps to 5–257 (ITLHDMTLRD…ETGVDVYRIA (253 aa)). Residue 13–14 (RD) coordinates substrate. Aspartate 14 serves as a coordination point for Mn(2+). Catalysis depends on histidine 17, which acts as the Proton acceptor. 2 residues coordinate substrate: serine 167 and histidine 196. Histidine 196 and histidine 198 together coordinate Mn(2+). Tyrosine 287 serves as a coordination point for substrate.

It belongs to the 4-hydroxy-2-oxovalerate aldolase family.

The enzyme catalyses (S)-4-hydroxy-2-oxopentanoate = acetaldehyde + pyruvate. The protein is 4-hydroxy-2-oxovalerate aldolase 3 (bpHI) of Cupriavidus necator (strain ATCC 17699 / DSM 428 / KCTC 22496 / NCIMB 10442 / H16 / Stanier 337) (Ralstonia eutropha).